The chain runs to 962 residues: Glycine dehydrogenase (decarboxylating) (962 aa).

Lysine 709 carries the post-translational modification N6-(pyridoxal phosphate)lysine.

The protein belongs to the GcvP family. In terms of assembly, the glycine cleavage system is composed of four proteins: P, T, L and H. Pyridoxal 5'-phosphate serves as cofactor.

The catalysed reaction is N(6)-[(R)-lipoyl]-L-lysyl-[glycine-cleavage complex H protein] + glycine + H(+) = N(6)-[(R)-S(8)-aminomethyldihydrolipoyl]-L-lysyl-[glycine-cleavage complex H protein] + CO2. Its function is as follows. The glycine cleavage system catalyzes the degradation of glycine. The P protein binds the alpha-amino group of glycine through its pyridoxal phosphate cofactor; CO(2) is released and the remaining methylamine moiety is then transferred to the lipoamide cofactor of the H protein. The polypeptide is Glycine dehydrogenase (decarboxylating) (Shewanella amazonensis (strain ATCC BAA-1098 / SB2B)).